Consider the following 306-residue polypeptide: MIGQKTLYSFFSPTPTGKRTTRSPEPVPGSGVAAEIGGDAVASPAKKARVEQNEQGSPLSAEQLVRIQRNKAAALLRLAARNVPAGFGESWKQQLCGEFGKPYFVKLMGFVAEERNHHKVYPPPEQVFTWTQMCDIRDVKVVILGQDPYHGPNQAHGLCFSVQRPVPPPPSLENIFKELSTDIDGFVHPGHGDLSGWARQGVLLLNAVLTVRAHQANSHKERGWEQFTDAVVSWLNQNLSGLVFLLWGSYAQKKGSVIDRKRHHVLQTAHPSPLSVHRGFLGCRHFSKANELLQKSGKKPINWKEL.

Residues 1-25 are interaction with FAM72A; sequence MIGQKTLYSFFSPTPTGKRTTRSPE. The interval 11–31 is disordered; sequence FSPTPTGKRTTRSPEPVPGSG. Residue serine 12 is modified to Phosphoserine. Positions 17-19 match the Important for nuclear sorting motif; sequence GKR. A phosphoserine mark is found at serine 23, serine 43, and serine 57. An interaction with RPA2 region spans residues 66–81; sequence RIQRNKAAALLRLAAR. Position 146 (glutamine 146) interacts with uracil. Aspartate 147 functions as the Proton acceptor in the catalytic mechanism. Residue histidine 150 coordinates dsDNA. Position 160 (phenylalanine 160) interacts with uracil. Serine 171 lines the dsDNA pocket. Asparagine 206 is a binding site for uracil. Serine 249, histidine 270, serine 272, and arginine 278 together coordinate dsDNA. Histidine 270 provides a ligand contact to uracil. Lysine 288 bears the N6-acetyllysine mark.

It belongs to the uracil-DNA glycosylase (UDG) superfamily. UNG family. In terms of assembly, interacts with RPA2 subunit of the RPA trimer; this interaction mediates UNG2 recruitment to RPA-coated single-stranded DNA at stalled replication forks. Interacts with PCNA; this interaction mediates UNG2 recruitment to S-phase replication foci. Interacts (via N-terminus) with FAM72A. Post-translationally, processed by cleavage of a transit peptide.

The protein localises to the mitochondrion. It is found in the nucleus. The catalysed reaction is Hydrolyzes single-stranded DNA or mismatched double-stranded DNA and polynucleotides, releasing free uracil.. The enzyme catalyses a 2'-deoxyuridine in single-stranded DNA + H2O = a 2'-deoxyribose 5'-monophosphate in single-stranded DNA + uracil. It catalyses the reaction a 2'-deoxyuridine in double-stranded DNA + H2O = a 2'-deoxyribose 5'-monophosphate in double-stranded DNA + uracil. Its function is as follows. Uracil-DNA glycosylase that hydrolyzes the N-glycosidic bond between uracil and deoxyribose in single- and double-stranded DNA (ssDNA and dsDNA) to release a free uracil residue and form an abasic (apurinic/apyrimidinic; AP) site. Excises uracil residues arising as a result of misincorporation of dUMP residues by DNA polymerase during replication or due to spontaneous or enzymatic deamination of cytosine. Mediates error-free base excision repair (BER) of uracil at replication forks. According to the model, it is recruited by PCNA to S-phase replication forks to remove misincorporated uracil at U:A base mispairs in nascent DNA strands. Via trimeric RPA it is recruited to ssDNA stretches ahead of the polymerase to allow detection and excision of deaminated cytosines prior to replication. The resultant AP sites temporarily stall replication, allowing time to repair the lesion. Mediates mutagenic uracil processing involved in antibody affinity maturation. Processes AICDA-induced U:G base mispairs at variable Ig regions leading to the generation of transversion mutations. Additionally, it operates at switch sites of Ig constant regions where it mediates Ig isotype class switch recombination. Excises AICDA-induced uracil residues forming AP sites that are subsequently nicked by APEX1 endonuclease. The accumulation of staggered nicks in opposite strands results in double strand DNA breaks that are finally resolved via non-homologous end joining repair pathway. The polypeptide is Uracil-DNA glycosylase (Ung) (Mus musculus (Mouse)).